The following is a 312-amino-acid chain: Ribosomal protein L11 methyltransferase (312 aa).

Residues Thr-163, Gly-184, Asp-206, and Asn-248 each contribute to the S-adenosyl-L-methionine site.

The protein belongs to the methyltransferase superfamily. PrmA family.

It is found in the cytoplasm. It catalyses the reaction L-lysyl-[protein] + 3 S-adenosyl-L-methionine = N(6),N(6),N(6)-trimethyl-L-lysyl-[protein] + 3 S-adenosyl-L-homocysteine + 3 H(+). Functionally, methylates ribosomal protein L11. The chain is Ribosomal protein L11 methyltransferase from Clostridium botulinum (strain Okra / Type B1).